Consider the following 817-residue polypeptide: Alpha-bisabolene synthase (817 aa).

D566, D570, D713, T717, and E721 together coordinate Mg(2+). The DDXXD motif motif lies at 566–570; sequence DDMYD.

This sequence belongs to the terpene synthase family. Tpsd subfamily. It depends on Mg(2+) as a cofactor. Mn(2+) serves as cofactor. K(+) is required as a cofactor.

Its subcellular location is the cytoplasm. It carries out the reaction (2E,6E)-farnesyl diphosphate = (E,R)-alpha-bisabolene + diphosphate. The protein operates within terpene metabolism; oleoresin biosynthesis. In terms of biological role, converts farnesyl diphosphate to alpha-bisabolene. Involved in defensive oleoresin formation in conifers in response to insect attack or other injury. Involved in sesquiterpene (C15) olefins biosynthesis. The polypeptide is Alpha-bisabolene synthase (ag1) (Abies grandis (Grand fir)).